We begin with the raw amino-acid sequence, 330 residues long: B3 domain-containing protein REM21 (330 aa).

The TF-B3 DNA-binding region spans Pro23–Gly116. The segment covering Glu129–Asn138 has biased composition (acidic residues). The segment at Glu129–Ser169 is disordered. Positions His142 to Asn162 are enriched in low complexity.

The protein localises to the nucleus. This Arabidopsis thaliana (Mouse-ear cress) protein is B3 domain-containing protein REM21 (REM21).